The following is a 437-amino-acid chain: Citrate synthase (437 aa).

Active-site residues include histidine 316 and aspartate 372.

The protein belongs to the citrate synthase family. As to quaternary structure, homohexamer.

The catalysed reaction is oxaloacetate + acetyl-CoA + H2O = citrate + CoA + H(+). Its pathway is carbohydrate metabolism; tricarboxylic acid cycle; isocitrate from oxaloacetate: step 1/2. Its activity is regulated as follows. Weakly inhibited by ATP (apparent Ki = 10 mm). In Corynebacterium glutamicum (strain ATCC 13032 / DSM 20300 / JCM 1318 / BCRC 11384 / CCUG 27702 / LMG 3730 / NBRC 12168 / NCIMB 10025 / NRRL B-2784 / 534), this protein is Citrate synthase (gltA).